Here is an 88-residue protein sequence, read N- to C-terminus: Sec-independent protein translocase protein TatA (88 aa).

Residues 1–21 traverse the membrane as a helical segment; that stretch reads MGSLSPWHWAILAVVVIVLFG. Over residues 43–52 the composition is skewed to basic and acidic residues; the sequence is MREMQSETKA. The tract at residues 43–88 is disordered; that stretch reads MREMQSETKAEPSAIETNTANPTPVQSQRIDPAAATGQDQTEARPA. Residues 57-71 show a composition bias toward polar residues; that stretch reads IETNTANPTPVQSQR.

The protein belongs to the TatA/E family. As to quaternary structure, the Tat system comprises two distinct complexes: a TatABC complex, containing multiple copies of TatA, TatB and TatC subunits, and a separate TatA complex, containing only TatA subunits. Substrates initially bind to the TatABC complex, which probably triggers association of the separate TatA complex to form the active translocon.

The protein resides in the cell membrane. Its function is as follows. Part of the twin-arginine translocation (Tat) system that transports large folded proteins containing a characteristic twin-arginine motif in their signal peptide across membranes. TatA could form the protein-conducting channel of the Tat system. The chain is Sec-independent protein translocase protein TatA from Mycobacterium marinum (strain ATCC BAA-535 / M).